The primary structure comprises 494 residues: Probable terminase, large subunit (494 aa).

26 to 33 (ADVLFGKT) is an ATP binding site. Positions 56–63 (SGHGTGKS) match the Walker A motif motif. The short motif at 158 to 163 (LYIIDE) is the Walker B motif element. The active-site For ATPase activity is glutamate 163. Residues aspartate 293, aspartate 356, and aspartate 446 each contribute to the Mg(2+) site.

It belongs to the punalikevirus large terminase family. As to quaternary structure, interacts with pacA protein. Mg(2+) serves as cofactor.

Component of the molecular motor that translocates genomic DNA in empty capsid during DNA packaging. Heterooligomerize with small terminase protein to be docked on capsid portal protein. Forms a ring-like structure through which genomic DNA is translocated into the capsid. May have or induce an endonuclease activity to cleave the genome concatemer after encapsidation. The polypeptide is Probable terminase, large subunit (pacB) (Escherichia coli (Bacteriophage P7)).